A 144-amino-acid chain; its full sequence is Large ribosomal subunit protein uL16 (144 aa).

Over residues 1-16 the composition is skewed to basic residues; sequence MLQPKKTKFRRQQKGR. The tract at residues 1-22 is disordered; it reads MLQPKKTKFRRQQKGRMKGEAQ.

Belongs to the universal ribosomal protein uL16 family. In terms of assembly, part of the 50S ribosomal subunit.

Its function is as follows. Binds 23S rRNA and is also seen to make contacts with the A and possibly P site tRNAs. The sequence is that of Large ribosomal subunit protein uL16 from Parabacteroides distasonis (strain ATCC 8503 / DSM 20701 / CIP 104284 / JCM 5825 / NCTC 11152).